The following is a 185-amino-acid chain: Homeobox expressed in ES cells 1 (185 aa).

Residues 32–69 (KKDCTTSVRPHRPWTDTCGDSEKGGNPPLHAPDLPSET) form a disordered region. The segment at residues 108–167 (GRRPRTAFTQNQVEVLENVFRVNCYPGIDIREDLAQKLNLEEDRIQIWFQNRRAKMKRSR) is a DNA-binding region (homeobox).

Belongs to the ANF homeobox family. As to quaternary structure, can form heterodimers with PROP1 in binding to DNA Interacts with TLE1. High levels found in the embryonic liver, lower level expression seen in the viscera, amnion and yolk sac.

It is found in the nucleus. Required for the normal development of the forebrain, eyes and other anterior structures such as the olfactory placodes and pituitary gland. Possible transcriptional repressor. Binds to the palindromic PIII sequence, 5'-AGCTTGAGTCTAATTGAATTAACTGTAC-3'. HESX1 and PROP1 bind as heterodimers on this palindromic site, and, in vitro, HESX1 can antagonize PROP1 activation. The sequence is that of Homeobox expressed in ES cells 1 (Hesx1) from Mus musculus (Mouse).